The sequence spans 85 residues: U4-theraphotoxin-Hhn1c (85 aa).

An N-terminal signal peptide occupies residues 1-22 (MKVTLIAIVTCAAVLVLHTTAA). A propeptide spanning residues 23–48 (EELEAESQLMEVGMPDTELAAVDEER) is cleaved from the precursor. 3 cysteine pairs are disulfide-bonded: Cys-52/Cys-66, Cys-56/Cys-77, and Cys-71/Cys-82.

Belongs to the neurotoxin 12 (Hwtx-2) family. 02 (Hwtx-2) subfamily. In terms of tissue distribution, expressed by the venom gland.

The protein resides in the secreted. Postsynaptic neurotoxin. The sequence is that of U4-theraphotoxin-Hhn1c from Cyriopagopus hainanus (Chinese bird spider).